The primary structure comprises 145 residues: D-aminoacyl-tRNA deacylase (145 aa).

A Gly-cisPro motif, important for rejection of L-amino acids motif is present at residues 137 to 138; that stretch reads GP.

Belongs to the DTD family. As to quaternary structure, homodimer.

Its subcellular location is the cytoplasm. It carries out the reaction glycyl-tRNA(Ala) + H2O = tRNA(Ala) + glycine + H(+). The enzyme catalyses a D-aminoacyl-tRNA + H2O = a tRNA + a D-alpha-amino acid + H(+). Functionally, an aminoacyl-tRNA editing enzyme that deacylates mischarged D-aminoacyl-tRNAs. Also deacylates mischarged glycyl-tRNA(Ala), protecting cells against glycine mischarging by AlaRS. Acts via tRNA-based rather than protein-based catalysis; rejects L-amino acids rather than detecting D-amino acids in the active site. By recycling D-aminoacyl-tRNA to D-amino acids and free tRNA molecules, this enzyme counteracts the toxicity associated with the formation of D-aminoacyl-tRNA entities in vivo and helps enforce protein L-homochirality. This chain is D-aminoacyl-tRNA deacylase, found in Lactobacillus acidophilus (strain ATCC 700396 / NCK56 / N2 / NCFM).